Consider the following 173-residue polypeptide: Bifunctional protein PyrR (173 aa).

The short motif at 93 to 105 (VILVDDVLYTGRT) is the PRPP-binding element.

This sequence belongs to the purine/pyrimidine phosphoribosyltransferase family. PyrR subfamily. As to quaternary structure, homodimer and homohexamer; in equilibrium.

It catalyses the reaction UMP + diphosphate = 5-phospho-alpha-D-ribose 1-diphosphate + uracil. Regulates transcriptional attenuation of the pyrimidine nucleotide (pyr) operon by binding in a uridine-dependent manner to specific sites on pyr mRNA. This disrupts an antiterminator hairpin in the RNA and favors formation of a downstream transcription terminator, leading to a reduced expression of downstream genes. Its function is as follows. Also displays a weak uracil phosphoribosyltransferase activity which is not physiologically significant. This is Bifunctional protein PyrR from Streptococcus uberis (strain ATCC BAA-854 / 0140J).